The chain runs to 215 residues: Wtf element wtf7 (215 aa).

A disordered region spans residues 1-21 (MSGSYAPIEDSADELSVHSGN). Helical transmembrane passes span 119–139 (LAQS…CLFF), 149–169 (LMGW…SFIL), and 189–209 (LILF…YALY).

The protein belongs to the WTF family.

It is found in the spore membrane. In terms of biological role, may act in meiotic drive. This Schizosaccharomyces pombe (strain 972 / ATCC 24843) (Fission yeast) protein is Wtf element wtf7.